A 285-amino-acid polypeptide reads, in one-letter code: Neuralized-like protein 2 (285 aa).

Residues 1 to 20 (MAAASEPVDSGALWGLERPE) form a disordered region. Residues 23–244 (PTRFHRVHGA…STKSVRLVQL (222 aa)) form the NHR domain. The SOCS box domain maps to 250 to 285 (SLQTLCRLVIQRSMVHRLAIDGLHLPKELKDFCKYE).

In terms of assembly, probable component the ECS(NEURL2) E3 ubiquitin-protein ligase complex consisting of ELOB/Elongin B, ELOC/Elongin C, CUL5, RBX1 and NEURL2. Interacts with CTNNB1. In terms of tissue distribution, expressed specifically in skeletal and cardiac muscles.

It localises to the cytoplasm. Its pathway is protein modification; protein ubiquitination. In terms of biological role, plays an important role in the process of myofiber differentiation and maturation. Probable substrate-recognition component of a SCF-like ECS (Elongin BC-CUL2/5-SOCS-box protein) E3 ubiquitin-protein ligase complex, which mediates the ubiquitination of proteins. Probably contributes to catalysis through recognition and positioning of the substrate and the ubiquitin-conjugating enzyme. During myogenesis, controls the ubiquitination and degradation of the specific pool of CTNNB1/beta-catenin located at the sarcolemma. In Homo sapiens (Human), this protein is Neuralized-like protein 2 (NEURL2).